Reading from the N-terminus, the 142-residue chain is Immunoglobulin omega chain (142 aa).

A signal peptide spans 1–19 (MAWTSVLLMLLAHLTGCGP). The segment at 20–41 (QPMVHQPPSASSSLGATIRLSC) is framework-1. Cys-41 and Cys-115 are oxidised to a cystine. Residues 42–56 (TLSNDHNIGIYSIYW) form a complementarity-determining-1 region. Residues 57 to 70 (YQQRPGHPPRFLLR) are framework-2. The complementarity-determining-2 stretch occupies residues 71 to 81 (YFSHSDKHQGP). A framework-3 region spans residues 82–115 (DIPPRFSGSKDTARNLGYLSISELQPEDEAVYYC).

It belongs to the immunoglobulin superfamily. Only expressed by pre-B-cells.

Associates with the Ig-mu chain to form a molecular complex that is expressed on the surface of pre-B-cells. This complex presumably regulates Ig gene rearrangements in the early steps of B-cell differentiation. This Mus musculus (Mouse) protein is Immunoglobulin omega chain.